Consider the following 507-residue polypeptide: MSETSEDEQTQLQTSDEEEDLGSEEEQEDEDNNHKEGDSEAALSGEDDKGSEDDAAEEQKLTWKDLGLNEALCQACDELKWKAPSKIQREAIPVALQGKDVIGLAETGSGKTGAFALPILHALLENPQRYFALVLTPTRELAFQIGEQFEALGSGIGIKCCVVVGGMDMVAQGLQLAKKPHIIIATPGRLVDHLENMKGFNLKAIKYLVMDEADRILNMDFEVELDKILKVLPRERRTFLFSATMTKKVKKLQRASLKDPVKVEVSNKYQTVEQLQQSYLFIPVKYKDVYLVHILNELAGNSFMIFCSTCNNTVKTALMLRALGLAAIPLHGQMSQNKRLAALNKFKAKNRSILISTDVASRGLDIPHVDVVVNFDIPTHSKDYIHRVGRTARAGRSGKAITLVSQYDIELYQRIEHLLGKQLTLYKCEEDEVMALQERVAEAQRTAKLELKDLEDTRGGHKRGGDTHDDSENFTGARKRMKPMGGTGGGGRKSFGKKNWSKGKQKR.

The segment covering 1–31 (MSETSEDEQTQLQTSDEEEDLGSEEEQEDED) has biased composition (acidic residues). A disordered region spans residues 1–58 (MSETSEDEQTQLQTSDEEEDLGSEEEQEDEDNNHKEGDSEAALSGEDDKGSEDDAAEE). A Q motif motif is present at residues 61 to 89 (LTWKDLGLNEALCQACDELKWKAPSKIQR). Residues 92-263 (IPVALQGKDV…RASLKDPVKV (172 aa)) enclose the Helicase ATP-binding domain. ATP is bound at residue 105–112 (AETGSGKT). The DEAD box signature appears at 211–214 (DEAD). In terms of domain architecture, Helicase C-terminal spans 290–434 (YLVHILNELA…LYKCEEDEVM (145 aa)). Positions 426 to 453 (YKCEEDEVMALQERVAEAQRTAKLELKD) form a coiled coil. The span at 451-471 (LKDLEDTRGGHKRGGDTHDDS) shows a compositional bias: basic and acidic residues. A disordered region spans residues 451-507 (LKDLEDTRGGHKRGGDTHDDSENFTGARKRMKPMGGTGGGGRKSFGKKNWSKGKQKR). Positions 494-507 (SFGKKNWSKGKQKR) are enriched in basic residues.

Belongs to the DEAD box helicase family. DDX47/RRP3 subfamily.

Its subcellular location is the nucleus. The protein resides in the nucleolus. The enzyme catalyses ATP + H2O = ADP + phosphate + H(+). Part of a translational control module, also containing ath/DHX33 and ais/DDX52, which coordinates germline stem cell differentiation with ribosome biogenesis during oogenesis. This module allows for coregulation of ribosomal proteins and non1/GTPBP4, a p53 repressor, preventing p53 stabilization, cell cycle arrest and loss of stem cell differentiation. With atos, adjusts transcription and translation of a subset of OXPHOS genes in macrophages to increase mitochondrial bioenergetics and allow tissue invasion. The chain is ATP-dependent RNA helicase DDX47 from Drosophila melanogaster (Fruit fly).